The following is a 441-amino-acid chain: POC1 centriolar protein homolog A (441 aa).

WD repeat units lie at residues 16 to 55 (GHRD…RAYR), 58 to 97 (GHKD…ESTV), 100 to 139 (AHTG…FLFS), 142 to 181 (QHIN…CIHS), 184 to 223 (EHGG…LIQH), 226 to 265 (VHSG…LLYT), and 268 to 307 (GHQG…ASYA). The tract at residues 323–380 (DYTSGVPAADRHRPERNAQTDQADDLEPRHIQMSAKDRSSPLSYTSRSIDQHHPQAED) is disordered. Composition is skewed to basic and acidic residues over residues 331-340 (ADRHRPERNA), 348-361 (LEPR…KDRS), and 371-380 (IDQHHPQAED). A coiled-coil region spans residues 400–427 (LTRTVGILEQRLSLTEDKLKECIDNQQA).

It belongs to the WD repeat POC1 family. As to quaternary structure, interacts with pat.

It localises to the cytoplasm. The protein resides in the cytoskeleton. Functionally, may play an important role in centriole assembly and/or stability and ciliogenesis. This chain is POC1 centriolar protein homolog A (poc1a), found in Xenopus tropicalis (Western clawed frog).